We begin with the raw amino-acid sequence, 304 residues long: Glycine--tRNA ligase alpha subunit (304 aa).

The protein belongs to the class-II aminoacyl-tRNA synthetase family. In terms of assembly, tetramer of two alpha and two beta subunits.

The protein localises to the cytoplasm. The catalysed reaction is tRNA(Gly) + glycine + ATP = glycyl-tRNA(Gly) + AMP + diphosphate. This Yersinia enterocolitica serotype O:8 / biotype 1B (strain NCTC 13174 / 8081) protein is Glycine--tRNA ligase alpha subunit.